The primary structure comprises 680 residues: Tumor protein 63 (680 aa).

The segment at 1–107 is transcription activation; sequence MNFETSRCAT…MQDSDLSDPM (107 aa). Residues 123–157 show a composition bias toward polar residues; the sequence is QIQNGSSSTSPYNTDHAQNSVTAPSPYAQPSSTFD. Residues 123-171 are disordered; it reads QIQNGSSSTSPYNTDHAQNSVTAPSPYAQPSSTFDALSPSPAIPSNTDY. The DNA-binding element occupies 170–362; that stretch reads DYPGPHSFDV…KADEDSIRKQ (193 aa). Residues cysteine 244, histidine 247, cysteine 308, and cysteine 312 each contribute to the Zn(2+) site. The span at 351 to 360 shows a compositional bias: basic and acidic residues; it reads DRKADEDSIR. Disordered stretches follow at residues 351 to 393 and 435 to 472; these read DRKA…IKKR and YRQQQQQQHQHLLQKQTSIQSPSSYGNSSPPLNKMNSM. Residues 352 to 388 form an interaction with HIPK2 region; it reads RKADEDSIRKQQVSDSTKNGDGTKRPFRQNTHGIQMT. Composition is skewed to polar residues over residues 361 to 371 and 379 to 389; these read KQQVSDSTKNG and RQNTHGIQMTS. The interval 394–443 is oligomerization; it reads RSPDDELLYLPVRGRETYEMLLKIKESLELMQYLPQHTIETYRQQQQQQH. A compositionally biased stretch (low complexity) spans 437 to 450; sequence QQQQQQHQHLLQKQ. Positions 451–472 are enriched in polar residues; that stretch reads TSIQSPSSYGNSSPPLNKMNSM. The SAM domain occupies 541–607; sequence PPYPTDCSIV…WKGILDHRQL (67 aa). Residues 610–680 form a transactivation inhibition region; sequence FSSPSHLLRT…KQQRIKEEGE (71 aa). Lysine 676 is covalently cross-linked (Glycyl lysine isopeptide (Lys-Gly) (interchain with G-Cter in SUMO)).

This sequence belongs to the p53 family. As to quaternary structure, binds DNA as a homotetramer. Isoform composition of the tetramer may determine transactivation activity. Isoforms Alpha and Gamma interact with HIPK2. Interacts with SSRP1, leading to stimulate coactivator activity. Isoform 1 and isoform 2 interact with WWP1. Interacts with PDS5A. Isoform 5 (via activation domain) interacts with NOC2L. It depends on Zn(2+) as a cofactor. Post-translationally, may be sumoylated. In terms of processing, ubiquitinated. Polyubiquitination involves WWP1 and leads to proteasomal degradation of this protein. As to expression, widely expressed, notably in heart, kidney, placenta, prostate, skeletal muscle, testis and thymus, although the precise isoform varies according to tissue type. Progenitor cell layers of skin, breast, eye and prostate express high levels of DeltaN-type isoforms. Isoform 10 is predominantly expressed in skin squamous cell carcinomas, but not in normal skin tissues.

It is found in the nucleus. Its function is as follows. Acts as a sequence specific DNA binding transcriptional activator or repressor. The isoforms contain a varying set of transactivation and auto-regulating transactivation inhibiting domains thus showing an isoform specific activity. Isoform 2 activates RIPK4 transcription. May be required in conjunction with TP73/p73 for initiation of p53/TP53 dependent apoptosis in response to genotoxic insults and the presence of activated oncogenes. Involved in Notch signaling by probably inducing JAG1 and JAG2. Plays a role in the regulation of epithelial morphogenesis. The ratio of DeltaN-type and TA*-type isoforms may govern the maintenance of epithelial stem cell compartments and regulate the initiation of epithelial stratification from the undifferentiated embryonal ectoderm. Required for limb formation from the apical ectodermal ridge. Activates transcription of the p21 promoter. In Homo sapiens (Human), this protein is Tumor protein 63 (TP63).